A 917-amino-acid chain; its full sequence is Bifunctional aspartokinase/homoserine dehydrogenase 2, chloroplastic (917 aa).

The N-terminal 89 residues, 1 to 89, are a transit peptide targeting the chloroplast; it reads MQGLAVSCQL…EVNTYLPKGD (89 aa). The aspartokinase stretch occupies residues 90–338; the sequence is MWSVHKFGGT…VSEAVILSTL (249 aa). Residues 339 to 563 form an interface region; that stretch reads SYQEAWEMSY…LSKTTLAVGI (225 aa). 2 ACT domains span residues 413–488 and 494–571; these read VEGT…VING and AVGL…LIGG. A homoserine dehydrogenase region spans residues 564 to 917; it reads IGPGLIGGAL…RLASYLGAPS (354 aa). Residues Ile-569 and Thr-650 each coordinate NAD(+). NADP(+)-binding residues include Ile-569, Thr-650, and Lys-674. 3 residues coordinate NADPH: Ile-569, Thr-650, and Lys-674. Na(+) is bound by residues Glu-701, Val-704, Ala-706, and Leu-708. NADP(+) is bound by residues Gly-759 and Glu-762. L-homoserine-binding residues include Glu-762 and Asp-773. The active-site Proton donor is Lys-777. Position 894 (Gly-894) interacts with NAD(+). An NADP(+)-binding site is contributed by Gly-894. Gly-894 contributes to the NADPH binding site.

In the N-terminal section; belongs to the aspartokinase family. The protein in the C-terminal section; belongs to the homoserine dehydrogenase family. As to quaternary structure, homo- or heterodimer. It depends on a metal cation as a cofactor.

Its subcellular location is the plastid. The protein localises to the chloroplast. The enzyme catalyses L-homoserine + NADP(+) = L-aspartate 4-semialdehyde + NADPH + H(+). It catalyses the reaction L-homoserine + NAD(+) = L-aspartate 4-semialdehyde + NADH + H(+). The catalysed reaction is L-aspartate + ATP = 4-phospho-L-aspartate + ADP. Its pathway is amino-acid biosynthesis; L-lysine biosynthesis via DAP pathway; (S)-tetrahydrodipicolinate from L-aspartate: step 1/4. The protein operates within amino-acid biosynthesis; L-methionine biosynthesis via de novo pathway; L-homoserine from L-aspartate: step 1/3. It functions in the pathway amino-acid biosynthesis; L-methionine biosynthesis via de novo pathway; L-homoserine from L-aspartate: step 3/3. It participates in amino-acid biosynthesis; L-threonine biosynthesis; L-threonine from L-aspartate: step 1/5. Its pathway is amino-acid biosynthesis; L-threonine biosynthesis; L-threonine from L-aspartate: step 3/5. Its function is as follows. Bifunctional aspartate kinase and homoserine dehydrogenase that catalyzes the first and the third steps toward the synthesis of lysine, methionine and threonine from aspartate. This chain is Bifunctional aspartokinase/homoserine dehydrogenase 2, chloroplastic (AKHSDH2), found in Zea mays (Maize).